Reading from the N-terminus, the 1304-residue chain is Zinc finger CCCH domain-containing protein 4 (1304 aa).

Residues 1–33 (MEAVPGTPPPPPSESPPPPSPPPPSTPSPPPCS) show a composition bias toward pro residues. Residues 1–387 (MEAVPGTPPP…SDHDKPHQQS (387 aa)) are disordered. A compositionally biased stretch (acidic residues) spans 53–73 (DREDGELEEGELEDDGAEEVQ). Over residues 80–99 (ERSRKEKGEKHHSDSEEEKS) the composition is skewed to basic and acidic residues. Residues Ser92 and Ser94 each carry the phosphoserine modification. A coiled-coil region spans residues 94–128 (SEEEKSHRRLKRKRKKEREKEKRRSKKRRKSKHKR). Residues 100-130 (HRRLKRKRKKEREKEKRRSKKRRKSKHKRHA) show a composition bias toward basic residues. The span at 135-144 (DFSDFSDDSD) shows a compositional bias: acidic residues. Phosphotyrosine is present on Tyr155. Positions 165 to 174 (SHQQYSSSHN) are enriched in polar residues. The segment covering 194–218 (EDYENEQYGEYEGDEEEDMGKEDYD) has biased composition (acidic residues). Basic and acidic residues predominate over residues 219–235 (DFTKELNQYRRAKEGSS). Residues 238–251 (RGSRGRGRGYRGRG) show a composition bias toward basic residues. The segment covering 252–264 (SRGGSRGRGMGRG) has biased composition (gly residues). A compositionally biased stretch (acidic residues) spans 277–303 (PEDEEDLYEEEIEYGESEEPMGDDDYD). The span at 304 to 320 (DYSKELNQYRRSKDSRG) shows a compositional bias: basic and acidic residues. Basic residues predominate over residues 322 to 346 (GLSRGRGRGSRGGRGKGMGRGRGRG). Residues 357 to 368 (NDDEDFYDDDMG) show a composition bias toward acidic residues. The span at 376-387 (RRSDHDKPHQQS) shows a compositional bias: basic and acidic residues. 3 consecutive C3H1-type zinc fingers follow at residues 389–416 (KKGK…HDIE), 418–445 (PKKR…HGDF), and 446–469 (PCKL…HDPL). Residues 485–495 (AEAGAEDEKEV) are compositionally biased toward acidic residues. Residues 485–567 (AEAGAEDEKE…LPTHEPLSPQ (83 aa)) form a disordered region. 2 stretches are compositionally biased toward pro residues: residues 506–529 (LPKP…PAPT) and 538–556 (GGPP…PPQM). The residue at position 599 (Arg599) is an Asymmetric dimethylarginine. Disordered stretches follow at residues 601–691 (PGPG…DSPH), 719–970 (PGLV…SHIK), and 994–1304 (LPIP…PFCQ). Residues 603–622 (PGGPSGPMGPGPNMGPPGPM) show a composition bias toward pro residues. Positions 628-660 (PDMHPDMHPDMHPDMHPDMHPDMHPDMHPDMHP) are enriched in basic and acidic residues. Positions 669-683 (NPGPPMGPGGPPMMP) are enriched in pro residues. Residues 778–809 (ALYLRIQQKQQEEERARRLAESSKQDRENEEG) are a coiled coil. Over residues 787–804 (QQEEERARRLAESSKQDR) the composition is skewed to basic and acidic residues. 2 positions are modified to phosphoserine: Ser816 and Ser817. Residues 824-852 (SSVTSILKTLRQQTSSRPQASVGEPSSSG) show a composition bias toward polar residues. The span at 869 to 884 (SDPRLSRDPRLSRHAE) shows a compositional bias: basic and acidic residues. Phosphoserine occurs at positions 913, 916, and 917. Over residues 913–929 (SLHSSPAGPSSSKGQPP) the composition is skewed to low complexity. Pro residues predominate over residues 994-1005 (LPIPKQDVPPVP). Composition is skewed to polar residues over residues 1028–1044 (NTRQ…SGSN) and 1058–1067 (VNVNTPGQSE). Basic and acidic residues predominate over residues 1068–1085 (KPSDPRVRKTPTDPRLQK). 2 stretches are compositionally biased toward low complexity: residues 1098–1129 (PCPT…VLAA) and 1137–1146 (SSGQSSVLSG). Phosphoserine is present on residues Ser1104, Ser1109, Ser1111, and Ser1115. Thr1119 bears the Phosphothreonine mark. Positions 1204-1220 (KASTDGATATDRYNSYN) are enriched in polar residues. The segment covering 1225–1235 (KATAAPTAASS) has biased composition (low complexity). Phosphoserine occurs at positions 1270 and 1276.

Belongs to the suppressor of sable family. As to quaternary structure, interacts with WDR82.

The protein resides in the chromosome. Functionally, RNA-binding protein that suppresses transcription of long non-coding RNAs (lncRNAs). LncRNAs are defined as transcripts more than 200 nucleotides that are not translated into protein. Together with WDR82, part of a transcription termination checkpoint that promotes transcription termination of lncRNAs and their subsequent degradation by the exosome. The transcription termination checkpoint is activated by the inefficiently spliced first exon of lncRNAs. In Mus musculus (Mouse), this protein is Zinc finger CCCH domain-containing protein 4.